The following is a 506-amino-acid chain: ATP synthase subunit alpha (506 aa).

171–178 is a binding site for ATP; that stretch reads GDRKTGKT.

This sequence belongs to the ATPase alpha/beta chains family. As to quaternary structure, F-type ATPases have 2 components, CF(1) - the catalytic core - and CF(0) - the membrane proton channel. CF(1) has five subunits: alpha(3), beta(3), gamma(1), delta(1), epsilon(1). CF(0) has three main subunits: a(1), b(2) and c(9-12). The alpha and beta chains form an alternating ring which encloses part of the gamma chain. CF(1) is attached to CF(0) by a central stalk formed by the gamma and epsilon chains, while a peripheral stalk is formed by the delta and b chains.

It is found in the cell inner membrane. The catalysed reaction is ATP + H2O + 4 H(+)(in) = ADP + phosphate + 5 H(+)(out). Produces ATP from ADP in the presence of a proton gradient across the membrane. The alpha chain is a regulatory subunit. The protein is ATP synthase subunit alpha of Anaplasma phagocytophilum (strain HZ).